The sequence spans 448 residues: tRNA-2-methylthio-N(6)-dimethylallyladenosine synthase (448 aa).

The region spanning 2–119 is the MTTase N-terminal domain; it reads KKLYIKTFGC…LSDLIAKRRE (118 aa). [4Fe-4S] cluster-binding residues include Cys-11, Cys-48, Cys-82, Cys-156, Cys-160, and Cys-163. The region spanning 142–377 is the Radical SAM core domain; it reads RQTRGSAYVS…LVESQANQIS (236 aa). Positions 378 to 444 constitute a TRAM domain; sequence QKMLGNIERV…NYTLRGKLVE (67 aa).

It belongs to the methylthiotransferase family. MiaB subfamily. As to quaternary structure, monomer. [4Fe-4S] cluster is required as a cofactor.

It localises to the cytoplasm. It carries out the reaction N(6)-dimethylallyladenosine(37) in tRNA + (sulfur carrier)-SH + AH2 + 2 S-adenosyl-L-methionine = 2-methylsulfanyl-N(6)-dimethylallyladenosine(37) in tRNA + (sulfur carrier)-H + 5'-deoxyadenosine + L-methionine + A + S-adenosyl-L-homocysteine + 2 H(+). In terms of biological role, catalyzes the methylthiolation of N6-(dimethylallyl)adenosine (i(6)A), leading to the formation of 2-methylthio-N6-(dimethylallyl)adenosine (ms(2)i(6)A) at position 37 in tRNAs that read codons beginning with uridine. The protein is tRNA-2-methylthio-N(6)-dimethylallyladenosine synthase of Polynucleobacter necessarius subsp. necessarius (strain STIR1).